The chain runs to 92 residues: Small ribosomal subunit protein uS19 (92 aa).

It belongs to the universal ribosomal protein uS19 family.

In terms of biological role, protein S19 forms a complex with S13 that binds strongly to the 16S ribosomal RNA. This Cereibacter sphaeroides (strain ATCC 17029 / ATH 2.4.9) (Rhodobacter sphaeroides) protein is Small ribosomal subunit protein uS19.